The sequence spans 424 residues: Dapdiamide A synthase (424 aa).

One can recognise an ATP-grasp domain in the interval 120–318; that stretch reads QEQLALKGVA…QISKLAQAVL (199 aa). ATP is bound at residue 147-209; sequence AGHAHWPVVL…QEFLAGEEFV (63 aa). Positions 275 and 287 each coordinate Mg(2+).

Mg(2+) serves as cofactor. Requires Mn(2+) as cofactor.

It carries out the reaction 3-[[[(2R,3R)-3-carboxyoxiran-2-yl]carbonyl]amino]-L-alanine + L-valine + ATP = dapdiamide E + ADP + phosphate + H(+). The enzyme catalyses N(3)-fumaramoyl-(S)-2,3-diaminopropanoate + L-valine + ATP = dapdiamide A + ADP + phosphate + H(+). The catalysed reaction is N(3)-fumaramoyl-(S)-2,3-diaminopropanoate + L-isoleucine + ATP = dapdiamide B + ADP + phosphate + H(+). It catalyses the reaction N(3)-fumaramoyl-(S)-2,3-diaminopropanoate + L-leucine + ATP = dapdiamide C + ADP + phosphate + H(+). Its pathway is antibiotic biosynthesis. Involved in dapdiamide antibiotics biosynthesis. Ligates N-beta-fumaramoyl-DAP and valine, isoleucine or leucine to form dapdiamides A, B or C, respectively. Also ligates N-beta-epoxysuccinamoyl-DAP and valine to form dapdiamide E. This chain is Dapdiamide A synthase, found in Enterobacter agglomerans (Erwinia herbicola).